We begin with the raw amino-acid sequence, 176 residues long: Probable RNA-binding protein EIF1AD (176 aa).

Positions 5 to 89 (TKKRYITNKV…VKGEIEYILD (85 aa)) constitute an S1-like domain. The span at 117-128 (AKRGKANDKMID) shows a compositional bias: basic and acidic residues. The tract at residues 117-176 (AKRGKANDKMIDDDMLPPSESEEEDDESEDEIEDTYDEDEETDDEEFDTYNPNRMQAPSK) is disordered. The span at 129-164 (DDMLPPSESEEEDDESEDEIEDTYDEDEETDDEEFD) shows a compositional bias: acidic residues. The span at 166 to 176 (YNPNRMQAPSK) shows a compositional bias: polar residues.

Belongs to the EIF1AD family.

This is Probable RNA-binding protein EIF1AD from Caenorhabditis briggsae.